Consider the following 283-residue polypeptide: NAD kinase (283 aa).

Asp-61 (proton acceptor) is an active-site residue. NAD(+) is bound by residues 61–62 (DG), 134–135 (ND), Arg-145, Asp-164, 175–180 (TAYNLS), and Gln-234.

This sequence belongs to the NAD kinase family. A divalent metal cation is required as a cofactor.

Its subcellular location is the cytoplasm. It carries out the reaction NAD(+) + ATP = ADP + NADP(+) + H(+). Its function is as follows. Involved in the regulation of the intracellular balance of NAD and NADP, and is a key enzyme in the biosynthesis of NADP. Catalyzes specifically the phosphorylation on 2'-hydroxyl of the adenosine moiety of NAD to yield NADP. The sequence is that of NAD kinase from Clostridium kluyveri (strain NBRC 12016).